A 1096-amino-acid polypeptide reads, in one-letter code: Inactive phospholipase C-like protein 1 (1096 aa).

Positions 1 to 101 (MAEGAASREA…KKTVSFSSMP (101 aa)) are disordered. The segment covering 26 to 41 (GADAASGDAAPEASGG) has biased composition (low complexity). Phosphoserine occurs at positions 48 and 78. Residues 83–222 (PSNQKCGGRK…NIWVSGLRYL (140 aa)) are interaction with PPP1C. Thr94 bears the Phosphothreonine mark. Ser96 bears the Phosphoserine mark. The PH domain maps to 114–224 (SFMQAGCELK…WVSGLRYLVS (111 aa)). The PI-PLC X-box domain maps to 399–543 (QDMTQPLSHY…LKHMIIVKGK (145 aa)). An interaction with GABA A beta subunit region spans residues 544-568 (KLPSESDLLEGEVTDEDEEAEMSRR). Thr557 bears the Phosphothreonine mark. Ser570 bears the Phosphoserine mark. A PI-PLC Y-box domain is found at 586-702 (LSDLVSICKS…GYVLRPSIMR (117 aa)). Residues 702–831 (RDEVSYFSAN…PGYRHVPLRS (130 aa)) enclose the C2 domain. Positions 1040–1060 (DLLKNAKNEAVENIKQIQLAC) form a coiled coil. The segment at 1067–1096 (KGPGSAAEAKGKRSLEAIEEKESSEENGKL) is disordered. The span at 1075-1096 (AKGKRSLEAIEEKESSEENGKL) shows a compositional bias: basic and acidic residues. Ser1080 carries the phosphoserine modification.

It belongs to the PRIP family. Interacts with PPP2CA, GABA receptor beta subunits, GABA receptor gamma-2 subunits. Interacts with Ins(1,4,5)P3, Ins(1,4,5,6)P4, GABARAP, and PPP1C. May form a ternary complex with GABA receptor beta subunit and GABARAP. The formation of a ternary complex with GABA receptor beta subunit and GABARAP could be the key step for facilitating the association of GABARAP with the GABA receptor gamma-2 subunit and to allow it to be transported at the right destination. Post-translationally, phosphorylation of Thr-94 resulted in dissociation of PPP1C from PRIP1. In vitro, phosphorylated by the catalytic subunit of PKA. Expressed in brain. Found in the granular cell and Purkinje cell layers in the cerebellum; and in the hippocampal pyramidal cells, dentate granule cells and pyramidal granule cells of the cerebral cortex in the cerebrum.

It localises to the cytoplasm. Functionally, involved in an inositol phospholipid-based intracellular signaling cascade. Shows no PLC activity to phosphatidylinositol 4,5-bisphosphate and phosphatidylinositol. Component in the phospho-dependent endocytosis process of GABA A receptor. Acts as an inhibitor of PPP1C. The protein is Inactive phospholipase C-like protein 1 (Plcl1) of Rattus norvegicus (Rat).